The primary structure comprises 1392 residues: Protein dispatched homolog 3 (1392 aa).

The Cytoplasmic portion of the chain corresponds to Met1–Cys73. The tract at residues Glu16–Ala40 is disordered. A helical membrane pass occupies residues Ala74 to Leu94. Over Tyr95–Asp462 the chain is Lumenal. A disordered region spans residues Gly162 to Arg248. The N-linked (GlcNAc...) asparagine glycan is linked to Asn163. Polar residues predominate over residues Ser190 to Arg199. Positions Arg457–Leu615 constitute an SSD domain. The chain crosses the membrane as a helical span at residues Met463–Cys483. Position 484 (Ser484) is a topological domain, cytoplasmic. Residues Val485–Leu505 traverse the membrane as a helical segment. At Tyr506–Val508 the chain is on the lumenal side. The helical transmembrane segment at Val509–Ile529 threads the bilayer. The Cytoplasmic segment spans residues Gly530 to Ala573. Residues Ala574–Met594 form a helical membrane-spanning segment. Residue Ser595 is a topological domain, lumenal. Residues Leu596–Trp616 form a helical membrane-spanning segment. The Cytoplasmic portion of the chain corresponds to Ser617 to Arg729. Residues Trp730–Leu750 traverse the membrane as a helical segment. Topologically, residues Arg751–Ser1182 are lumenal. A glycan (N-linked (GlcNAc...) asparagine) is linked at Asn1021. The helical transmembrane segment at Ala1183–Thr1203 threads the bilayer. A topological domain (cytoplasmic) is located at residue His1204. A helical transmembrane segment spans residues Ile1205–Ile1225. At Met1226–Val1291 the chain is on the lumenal side. Residues Ala1292–Ile1312 form a helical membrane-spanning segment. Residues Ala1313–Lys1320 lie on the Cytoplasmic side of the membrane. A helical transmembrane segment spans residues Ile1321–Leu1341. The Lumenal segment spans residues Gly1342–Lys1358. Residues Ala1359–Gln1379 form a helical membrane-spanning segment. Residues Ser1380–Leu1392 are Cytoplasmic-facing.

This sequence belongs to the patched family. Expressed in brain and testis.

Its subcellular location is the endoplasmic reticulum membrane. The protein localises to the nucleus membrane. The protein resides in the cytoplasmic vesicle membrane. Functionally, plays a role in neuronal proliferation and differentiation. Plays a role in the accumulation of cellular cholesterol. Involved in intracellular lipid droplet formation. May contribute to cholesterol homeostasis in neuronal cells. The polypeptide is Protein dispatched homolog 3 (Homo sapiens (Human)).